Reading from the N-terminus, the 213-residue chain is Histidine biosynthesis bifunctional protein HisIE (213 aa).

The phosphoribosyl-AMP cyclohydrolase stretch occupies residues 1 to 114 (MLTTEKYQGL…FHPALTDFSF (114 aa)). The segment at 115–213 (LFQLENIISI…RVRSKLKKKH (99 aa)) is phosphoribosyl-ATP pyrophosphohydrolase.

The protein in the N-terminal section; belongs to the PRA-CH family. It in the C-terminal section; belongs to the PRA-PH family.

The protein resides in the cytoplasm. It catalyses the reaction 1-(5-phospho-beta-D-ribosyl)-ATP + H2O = 1-(5-phospho-beta-D-ribosyl)-5'-AMP + diphosphate + H(+). The enzyme catalyses 1-(5-phospho-beta-D-ribosyl)-5'-AMP + H2O = 1-(5-phospho-beta-D-ribosyl)-5-[(5-phospho-beta-D-ribosylamino)methylideneamino]imidazole-4-carboxamide. The protein operates within amino-acid biosynthesis; L-histidine biosynthesis; L-histidine from 5-phospho-alpha-D-ribose 1-diphosphate: step 2/9. It participates in amino-acid biosynthesis; L-histidine biosynthesis; L-histidine from 5-phospho-alpha-D-ribose 1-diphosphate: step 3/9. In Blochmanniella floridana, this protein is Histidine biosynthesis bifunctional protein HisIE.